The primary structure comprises 302 residues: MTEISELASSSQKPEKTKYNLPKPLPAYYPHPGSPLYADKELYARIANAPKKLVGRHVCQPRTGLAVKIPQKSIFSIVVPEGPQVCDLNIWNFHNPRERFWAARTRQIHSAHVSTYDRLWSTLPYLRPLVTIIGDSLQARHDEWGGRVHDTLGTRCDPYIDKLISGKDNDLHCHSNLTRAIMPYGLTEFDVHDVLNVFQVTGLNEYDQYFMETCPATSKDYFQCFAEQDLLVAISACPGGDLSNWGWGEDATDVESSKMVDCCRPLAIEVYELEDEENSLKGWVPPQVVNYTGNHGLKAPSS.

Residues Met-1–Pro-24 form a disordered region.

This is an uncharacterized protein from Schizosaccharomyces pombe (strain 972 / ATCC 24843) (Fission yeast).